A 216-amino-acid polypeptide reads, in one-letter code: Probable RNA 2'-phosphotransferase 2 (216 aa).

Belongs to the KptA/TPT1 family.

Removes the 2'-phosphate from RNA via an intermediate in which the phosphate is ADP-ribosylated by NAD followed by a presumed transesterification to release the RNA and generate ADP-ribose 1''-2''-cyclic phosphate (APPR&gt;P). May function as an ADP-ribosylase. The chain is Probable RNA 2'-phosphotransferase 2 (kptA2) from Archaeoglobus fulgidus (strain ATCC 49558 / DSM 4304 / JCM 9628 / NBRC 100126 / VC-16).